The following is a 431-amino-acid chain: Adenylosuccinate synthetase (431 aa).

Residues 13–19 and 41–43 each bind GTP; these read GDEGKGK and GHT. Asp14 serves as the catalytic Proton acceptor. Asp14 and Gly41 together coordinate Mg(2+). IMP is bound by residues 14-17, 39-42, Thr130, Arg144, Gln225, Thr240, and Arg304; these read DEGK and NAGH. His42 functions as the Proton donor in the catalytic mechanism. Position 300 to 306 (300 to 306) interacts with substrate; that stretch reads ATTHRPR. Residues Arg306, 332–334, and 414–416 each bind GTP; these read KLD and STG.

It belongs to the adenylosuccinate synthetase family. In terms of assembly, homodimer. The cofactor is Mg(2+).

The protein resides in the cytoplasm. The enzyme catalyses IMP + L-aspartate + GTP = N(6)-(1,2-dicarboxyethyl)-AMP + GDP + phosphate + 2 H(+). The protein operates within purine metabolism; AMP biosynthesis via de novo pathway; AMP from IMP: step 1/2. Plays an important role in the de novo pathway of purine nucleotide biosynthesis. Catalyzes the first committed step in the biosynthesis of AMP from IMP. The polypeptide is Adenylosuccinate synthetase (Nitrosococcus oceani (strain ATCC 19707 / BCRC 17464 / JCM 30415 / NCIMB 11848 / C-107)).